We begin with the raw amino-acid sequence, 353 residues long: MTAILERRESESLWGRFCNWITSTENRLYIGWFGVLMIPTLLTATSVFIIAFIAAPPVDIDGIREPVSGSLLYGNNIISGAIIPTSAAIGLHFYPIWEAASVDEWLYNGGPYELIVLHFLLGVACYMGREWELSFRLGMRPWIAVAYSAPVAAATAVFLIYPIGQGSFSDGMPLGISGTFNFMIVFQAEHNILMHPFHMLGVAGVFGGSLFSAMHGSLVTSSLIRETTENESANEGYRFGQEEETYNIVAAHGYFGRLIFQYASFNNSRSLHFFLAAWPVVGIWFTALGISTMAFNLNGFNFNQSVVDSQGRVINTWADIINRANLGMEVMHERNAHNFPLDLAAVEVPSTNG.

Residue Thr-2 is modified to N-acetylthreonine. Thr-2 is modified (phosphothreonine). The next 3 membrane-spanning stretches (helical) occupy residues 29–46, 118–133, and 142–156; these read YIGW…TATS, HFLL…EWEL, and WIAV…AATA. A chlorophyll a-binding site is contributed by His-118. Position 126 (Tyr-126) interacts with pheophytin a. Residues Asp-170 and Glu-189 each contribute to the [CaMn4O5] cluster site. Residues 197 to 218 traverse the membrane as a helical segment; the sequence is FHMLGVAGVFGGSLFSAMHGSL. Residue His-198 participates in chlorophyll a binding. Residues His-215 and 264–265 each bind a quinone; that span reads SF. Fe cation is bound at residue His-215. His-272 contributes to the Fe cation binding site. Residues 274 to 288 traverse the membrane as a helical segment; the sequence is FLAAWPVVGIWFTAL. His-332, Glu-333, Asp-342, and Ala-344 together coordinate [CaMn4O5] cluster. Positions 345–353 are excised as a propeptide; that stretch reads AVEVPSTNG.

The protein belongs to the reaction center PufL/M/PsbA/D family. As to quaternary structure, PSII is composed of 1 copy each of membrane proteins PsbA, PsbB, PsbC, PsbD, PsbE, PsbF, PsbH, PsbI, PsbJ, PsbK, PsbL, PsbM, PsbT, PsbX, PsbY, PsbZ, Psb30/Ycf12, at least 3 peripheral proteins of the oxygen-evolving complex and a large number of cofactors. It forms dimeric complexes. Requires The D1/D2 heterodimer binds P680, chlorophylls that are the primary electron donor of PSII, and subsequent electron acceptors. It shares a non-heme iron and each subunit binds pheophytin, quinone, additional chlorophylls, carotenoids and lipids. D1 provides most of the ligands for the Mn4-Ca-O5 cluster of the oxygen-evolving complex (OEC). There is also a Cl(-1) ion associated with D1 and D2, which is required for oxygen evolution. The PSII complex binds additional chlorophylls, carotenoids and specific lipids. as cofactor. Post-translationally, tyr-161 forms a radical intermediate that is referred to as redox-active TyrZ, YZ or Y-Z. In terms of processing, C-terminally processed by CTPA; processing is essential to allow assembly of the oxygen-evolving complex and thus photosynthetic growth.

It is found in the plastid. The protein resides in the chloroplast thylakoid membrane. The catalysed reaction is 2 a plastoquinone + 4 hnu + 2 H2O = 2 a plastoquinol + O2. In terms of biological role, photosystem II (PSII) is a light-driven water:plastoquinone oxidoreductase that uses light energy to abstract electrons from H(2)O, generating O(2) and a proton gradient subsequently used for ATP formation. It consists of a core antenna complex that captures photons, and an electron transfer chain that converts photonic excitation into a charge separation. The D1/D2 (PsbA/PsbD) reaction center heterodimer binds P680, the primary electron donor of PSII as well as several subsequent electron acceptors. The protein is Photosystem II protein D1 of Eucalyptus globulus subsp. globulus (Tasmanian blue gum).